The primary structure comprises 610 residues: Elongation factor 4 (610 aa).

The 185-residue stretch at 14-198 (ANIRNFSIVA…AIVTRLPPPQ (185 aa)) folds into the tr-type G domain. GTP-binding positions include 26–31 (DHGKST) and 145–148 (NKVD).

Belongs to the TRAFAC class translation factor GTPase superfamily. Classic translation factor GTPase family. LepA subfamily.

It localises to the cell inner membrane. The enzyme catalyses GTP + H2O = GDP + phosphate + H(+). In terms of biological role, required for accurate and efficient protein synthesis under certain stress conditions. May act as a fidelity factor of the translation reaction, by catalyzing a one-codon backward translocation of tRNAs on improperly translocated ribosomes. Back-translocation proceeds from a post-translocation (POST) complex to a pre-translocation (PRE) complex, thus giving elongation factor G a second chance to translocate the tRNAs correctly. Binds to ribosomes in a GTP-dependent manner. The polypeptide is Elongation factor 4 (Nitrobacter hamburgensis (strain DSM 10229 / NCIMB 13809 / X14)).